The primary structure comprises 1271 residues: Probable WRKY transcription factor protein 1 (1271 aa).

Positions 1 to 12 (MGAQYSTELNKY) are enriched in polar residues. Disordered stretches follow at residues 1–138 (MGAQ…NSDR), 204–312 (NNNN…QQNG), and 370–515 (NNNN…RTNS). The stretch at 9-71 (LNKYNNNNNN…NNNNNNNNNN (63 aa)) forms a coiled coil. Composition is skewed to low complexity over residues 13–103 (NNNN…NNNN), 116–135 (INNTNKDTNIPNNSNSNNNN), 204–216 (NNNNNNNNNNENN), and 223–259 (SSTTTTTTTTTTTNNNSNNNNNNNNNNNNNNNNNNNN). The segment covering 260–274 (NEDDEDDYGDDDTIE) has biased composition (acidic residues). Polar residues predominate over residues 297 to 312 (SNLNDTNGGNSPQQNG). A coiled-coil region spans residues 320 to 372 (KKLLALQQKQLEQEQEQKQQQKQQQQQQQQQQQQQQQQQQQQQKDAIENINNN). Residues 370–388 (NNNNNNKLQPIVKNSVNKT) are compositionally biased toward low complexity. Over residues 413–442 (NEDEYDASDEYIDDDDDDDEKYDDDDDEYF) the composition is skewed to acidic residues. The segment covering 443–458 (EGNNNNNYKKNNISNK) has biased composition (low complexity). Residues 475 to 487 (EIFKQKKLNHDKN) show a composition bias toward basic and acidic residues. The span at 488–515 (QSNPKQQLTSHSEFDNSLLNKNQSRTNS) shows a compositional bias: polar residues. Residues 520–574 (LQIKEENYHQIQQEHGEKQQQQQQQQQQPQQQQQQQQQQQQQQQQEMQVDKEQTE) adopt a coiled-coil conformation. Basic and acidic residues predominate over residues 578 to 587 (NTNKKEEQKP). Disordered stretches follow at residues 578-650 (NTNK…EGFL) and 667-811 (SKKS…NISN). Positions 610–642 (NNENNNNNNNNNNNNNNNNNNNNNNNNNNYRNN) are enriched in low complexity. Polar residues predominate over residues 672–702 (NVVPTSPKSNLSDQQPPFSPVQISPQKQSPA). Composition is skewed to low complexity over residues 703-715 (TTTTTTTTTTPTP), 725-766 (NNNI…NNIN), and 774-811 (NSTQNNNNNNNNNNNSPQNSNTNSNNSNNSNNSNNISN). The stretch at 766-786 (NNEEDEENNSTQNNNNNNNNN) forms a coiled coil. Positions 808-872 (NISNIVSDGY…YKGEHCHGFP (65 aa)) form a DNA-binding region, WRKY 1. Zn(2+)-binding residues include C839, C844, H867, and H869. Residues 890–1095 (FEGLDGNNNN…RFNGTSESKG (206 aa)) are disordered. Low complexity predominate over residues 895 to 918 (GNNNNNNNNNNNNNNYSSNSNSNG). A compositionally biased stretch (gly residues) spans 919–937 (NGNGNGNGNGNGNGNGNGN). A compositionally biased stretch (low complexity) spans 938-956 (SNGNQDQNGNSFNDQNGDS). Over residues 957–966 (PTQHGQISPM) the composition is skewed to polar residues. Positions 967–995 (NSPKNTIPTTTTTTTSISTYVNTNSTNKK) are enriched in low complexity. Residues 998–1010 (SKQEKKISVKNET) show a composition bias toward basic and acidic residues. Positions 1011 to 1021 (TDDDEFQEDID) are enriched in acidic residues. A coiled-coil region spans residues 1013 to 1040 (DDEFQEDIDQLSNNNNNNNNNNNNNNNN). Low complexity predominate over residues 1025 to 1085 (NNNNNNNNNN…NNNNNNNNNN (61 aa)). Residues 1105-1167 (SSIDHLDDGF…YRGKHNHDPP (63 aa)) constitute a DNA-binding region (WRKY 2). Zn(2+)-binding residues include C1136, C1141, H1162, and H1164. The interval 1180–1210 (NGLYNNNNNNNNNNNNNNNNNNNNNNINNIN) is disordered. Low complexity predominate over residues 1184-1210 (NNNNNNNNNNNNNNNNNNNNNNINNIN).

It belongs to the WRKY group I family.

The protein resides in the nucleus. Its function is as follows. Probable transcription factor. Interacts specifically with the W box (5'-(T)TGAC[CT]-3'), a frequently occurring elicitor-responsive cis-acting element. This chain is Probable WRKY transcription factor protein 1 (wrky1), found in Dictyostelium discoideum (Social amoeba).